Reading from the N-terminus, the 459-residue chain is Major capsid protein (459 aa).

Belongs to the NCLDV major capsid protein family. As to quaternary structure, homotrimer.

Its subcellular location is the virion. Its function is as follows. Major capsid protein that self assembles to form an icosahedral capsid. Represents around 50% of the total virion protein mass. The sequence is that of Major capsid protein (MCP) from Pleuronectoidei (LCDV-1).